The primary structure comprises 346 residues: Tetraacyldisaccharide 4'-kinase (346 aa).

ATP is bound at residue 54–61 (TVGGAGKT).

It belongs to the LpxK family.

The catalysed reaction is a lipid A disaccharide + ATP = a lipid IVA + ADP + H(+). Its pathway is glycolipid biosynthesis; lipid IV(A) biosynthesis; lipid IV(A) from (3R)-3-hydroxytetradecanoyl-[acyl-carrier-protein] and UDP-N-acetyl-alpha-D-glucosamine: step 6/6. Functionally, transfers the gamma-phosphate of ATP to the 4'-position of a tetraacyldisaccharide 1-phosphate intermediate (termed DS-1-P) to form tetraacyldisaccharide 1,4'-bis-phosphate (lipid IVA). This is Tetraacyldisaccharide 4'-kinase from Rhizobium meliloti (strain 1021) (Ensifer meliloti).